Consider the following 235-residue polypeptide: Phosphoribosylaminoimidazole-succinocarboxamide synthase (235 aa).

Belongs to the SAICAR synthetase family.

The catalysed reaction is 5-amino-1-(5-phospho-D-ribosyl)imidazole-4-carboxylate + L-aspartate + ATP = (2S)-2-[5-amino-1-(5-phospho-beta-D-ribosyl)imidazole-4-carboxamido]succinate + ADP + phosphate + 2 H(+). Its pathway is purine metabolism; IMP biosynthesis via de novo pathway; 5-amino-1-(5-phospho-D-ribosyl)imidazole-4-carboxamide from 5-amino-1-(5-phospho-D-ribosyl)imidazole-4-carboxylate: step 1/2. The chain is Phosphoribosylaminoimidazole-succinocarboxamide synthase from Streptococcus pneumoniae serotype 2 (strain D39 / NCTC 7466).